Reading from the N-terminus, the 457-residue chain is Multidrug resistance protein MdtK (457 aa).

A run of 12 helical transmembrane segments spans residues 11–31, 53–73, 93–113, 127–147, 160–180, 188–208, 243–263, 276–296, 314–334, 357–377, 387–407, and 418–438; these read LLALAIPVILAQIAQTAMGFV, IWLPAILFGHGLLLALTPVIA, WLAGCVSVLIMFVLWNAGYII, AVGYLRALLWGAPGYLFFQVA, GMVIGFLGLLVNIPVNYIFIY, LGGVGCGVATAAVYWVMFIAM, LPIALALFFEVTLFAVVALLV, IALNFSSLMFVLPMSLAAAVT, AARTGLGVGVCMAVITAIFTV, LMLLAAVYQISDSIQVIGSGI, IFFITFTAYWVLGLPSGYILA, and PAGFWMGFIIGLTSAAIMMML.

The protein belongs to the multi antimicrobial extrusion (MATE) (TC 2.A.66.1) family. MdtK subfamily.

The protein localises to the cell inner membrane. Multidrug efflux pump that functions probably as a Na(+)/drug antiporter. This is Multidrug resistance protein MdtK from Citrobacter koseri (strain ATCC BAA-895 / CDC 4225-83 / SGSC4696).